Reading from the N-terminus, the 529-residue chain is Bifunctional purine biosynthesis protein PurH (529 aa).

In terms of domain architecture, MGS-like spans 1-148 (MQQRRPVRRA…KNHKDVAIVV (148 aa)). At Lys287 the chain carries N6-acetyllysine.

It belongs to the PurH family.

The catalysed reaction is (6R)-10-formyltetrahydrofolate + 5-amino-1-(5-phospho-beta-D-ribosyl)imidazole-4-carboxamide = 5-formamido-1-(5-phospho-D-ribosyl)imidazole-4-carboxamide + (6S)-5,6,7,8-tetrahydrofolate. It carries out the reaction IMP + H2O = 5-formamido-1-(5-phospho-D-ribosyl)imidazole-4-carboxamide. The protein operates within purine metabolism; IMP biosynthesis via de novo pathway; 5-formamido-1-(5-phospho-D-ribosyl)imidazole-4-carboxamide from 5-amino-1-(5-phospho-D-ribosyl)imidazole-4-carboxamide (10-formyl THF route): step 1/1. Its pathway is purine metabolism; IMP biosynthesis via de novo pathway; IMP from 5-formamido-1-(5-phospho-D-ribosyl)imidazole-4-carboxamide: step 1/1. The chain is Bifunctional purine biosynthesis protein PurH from Escherichia coli O6:H1 (strain CFT073 / ATCC 700928 / UPEC).